Reading from the N-terminus, the 216-residue chain is Glycerol-3-phosphate acyltransferase (216 aa).

6 helical membrane-spanning segments follow: residues 3 to 23 (FPIFALFSFVSGSIPFGYWIA), 48 to 68 (IGWKFGFIVLALDITKGMLPV), 82 to 102 (FQLLCGVCAVLGHMFSPFLGF), 112 to 132 (FGVFLVLTPIACLGAVLVFWV), 142 to 162 (LGSIFASITLPLVYAFSTILL), and 166 to 186 (EVSYWVLGTMVFISFGIILTH).

Belongs to the PlsY family. As to quaternary structure, probably interacts with PlsX.

Its subcellular location is the cell inner membrane. It catalyses the reaction an acyl phosphate + sn-glycerol 3-phosphate = a 1-acyl-sn-glycero-3-phosphate + phosphate. It participates in lipid metabolism; phospholipid metabolism. Its function is as follows. Catalyzes the transfer of an acyl group from acyl-phosphate (acyl-PO(4)) to glycerol-3-phosphate (G3P) to form lysophosphatidic acid (LPA). This enzyme utilizes acyl-phosphate as fatty acyl donor, but not acyl-CoA or acyl-ACP. This Leptospira interrogans serogroup Icterohaemorrhagiae serovar Lai (strain 56601) protein is Glycerol-3-phosphate acyltransferase.